We begin with the raw amino-acid sequence, 33 residues long: VTCFCKRPVCDSGETQIGYCRLGNTFYRLCCRQ.

Disulfide bonds link cysteine 3–cysteine 31, cysteine 5–cysteine 20, and cysteine 10–cysteine 30.

The protein belongs to the alpha-defensin family. HANP-2 could be a product of proteolytic N-terminal amino acid removal from HANP-4.

It localises to the secreted. Bactericidal activity, greater against Gram-positive bacteria. Low anti-fungi activity. In Mesocricetus auratus (Golden hamster), this protein is Neutrophil defensin 4.